Reading from the N-terminus, the 203-residue chain is Thymidylate kinase (203 aa).

An ATP-binding site is contributed by 10–17 (GIDGAGKS).

This sequence belongs to the thymidylate kinase family.

It catalyses the reaction dTMP + ATP = dTDP + ADP. Functionally, phosphorylation of dTMP to form dTDP in both de novo and salvage pathways of dTTP synthesis. The sequence is that of Thymidylate kinase from Cupriavidus necator (strain ATCC 17699 / DSM 428 / KCTC 22496 / NCIMB 10442 / H16 / Stanier 337) (Ralstonia eutropha).